The primary structure comprises 319 residues: Beta-ketoacyl-[acyl-carrier-protein] synthase III (319 aa).

Active-site residues include cysteine 110 and histidine 246. An ACP-binding region spans residues 247–251; that stretch reads QANYR. Asparagine 276 is a catalytic residue.

This sequence belongs to the thiolase-like superfamily. FabH family. In terms of assembly, homodimer.

It is found in the cytoplasm. It carries out the reaction malonyl-[ACP] + acetyl-CoA + H(+) = 3-oxobutanoyl-[ACP] + CO2 + CoA. It functions in the pathway lipid metabolism; fatty acid biosynthesis. In terms of biological role, catalyzes the condensation reaction of fatty acid synthesis by the addition to an acyl acceptor of two carbons from malonyl-ACP. Catalyzes the first condensation reaction which initiates fatty acid synthesis and may therefore play a role in governing the total rate of fatty acid production. Possesses both acetoacetyl-ACP synthase and acetyl transacylase activities. Its substrate specificity determines the biosynthesis of branched-chain and/or straight-chain of fatty acids. The chain is Beta-ketoacyl-[acyl-carrier-protein] synthase III from Lactobacillus delbrueckii subsp. bulgaricus (strain ATCC BAA-365 / Lb-18).